The chain runs to 777 residues: Gliding motility regulatory protein (777 aa).

The region spanning 1–108 (MDTEALKKSL…SDLNEDLSGA (108 aa)) is the HPt domain. Phosphohistidine; by autocatalysis is present on histidine 49. Disordered stretches follow at residues 129–149 (TPPA…PPAP) and 164–212 (PAPV…KSAV). Pro residues-rich tracts occupy residues 139–149 (VAPPPAPPPAP) and 164–177 (PAPV…PPTQ). Residues 178 to 197 (APVAEPGAHAAAAAPHPAAA) are compositionally biased toward low complexity. Residues 270–509 (DISNEVREQL…TITLRLPQSL (240 aa)) form the Histidine kinase domain. In terms of domain architecture, CheW-like spans 511 to 645 (LMKVLLVRLG…VPDIMAEVRR (135 aa)). One can recognise a Response regulatory domain in the interval 660–776 (RVLLVDDSPI…EVLAQAIDRL (117 aa)). Aspartate 709 carries the post-translational modification 4-aspartylphosphate.

It catalyses the reaction ATP + protein L-histidine = ADP + protein N-phospho-L-histidine.. In terms of biological role, frzE is involved in a sensory transduction pathway that controls the frequency at which cells reverse their gliding direction. FrzE seems to be capable of autophosphorylating itself on a histidine residue and then to transfer that group to an aspartate residue in the C-terminal part of the protein. The chain is Gliding motility regulatory protein (frzE) from Myxococcus xanthus.